Here is a 229-residue protein sequence, read N- to C-terminus: ATP synthase subunit a (229 aa).

6 helical membrane-spanning segments follow: residues 14 to 34 (LIAITNSSMMMMLAVAVALIL), 68 to 88 (YFPFVFTLFIFIVFLNILGLF), 98 to 118 (IVVTLGLSFSIVIGVTLGGLW), 124 to 144 (FLSILMPAGAPLALAPLLVLI), 157 to 179 (GVRLAANLSAGHLLFAILAGFGF), and 189 to 209 (NIFPVLIMVFISLLEAAVAVI).

Belongs to the ATPase A chain family. F-type ATPases have 2 components, CF(1) - the catalytic core - and CF(0) - the membrane proton channel. CF(1) has five subunits: alpha(3), beta(3), gamma(1), delta(1), epsilon(1). CF(0) has three main subunits: a, b and c.

The protein resides in the mitochondrion inner membrane. Mitochondrial membrane ATP synthase (F(1)F(0) ATP synthase or Complex V) produces ATP from ADP in the presence of a proton gradient across the membrane which is generated by electron transport complexes of the respiratory chain. F-type ATPases consist of two structural domains, F(1) - containing the extramembraneous catalytic core and F(0) - containing the membrane proton channel, linked together by a central stalk and a peripheral stalk. During catalysis, ATP synthesis in the catalytic domain of F(1) is coupled via a rotary mechanism of the central stalk subunits to proton translocation. Key component of the proton channel; it may play a direct role in the translocation of protons across the membrane. The polypeptide is ATP synthase subunit a (ATPASE6) (Metridium senile (Brown sea anemone)).